A 264-amino-acid chain; its full sequence is MSSTQEDQPNPDFEIDHPEAYSQYFLTAPREISFYLNLLVKRGSLLTAHIDDGKAFFLTTMIAVDDEKQAIFLDSAQADELNTAAKNAHRITLTAKLDRVKIQLRLPPLRHQLVDGQKMLVAAFPQAILRIQRREFFRLESSSAHPILCRIAMEAPEGTLKTFEWNVADISGGGLSLNAPTSLINDCQRDALFKNSRLDIPGEGVLLVNLRVRKTSEFSAENGQHYLRVGCEFVELPGSRLAMIERYIARIERERKARDSGLAN.

Residues 132-249 (QRREFFRLES…RLAMIERYIA (118 aa)) enclose the PilZ domain.

This sequence belongs to the YcgR family. In terms of assembly, monomer. Interacts with the flagellar basal bodies.

It is found in the bacterial flagellum basal body. Its function is as follows. Acts as a flagellar brake, regulating swimming and swarming in a bis-(3'-5') cyclic diguanylic acid (c-di-GMP)-dependent manner. Binds 1 c-di-GMP dimer per subunit. Increasing levels of c-di-GMP lead to decreased motility. This Dechloromonas aromatica (strain RCB) protein is Flagellar brake protein YcgR 1.